The chain runs to 85 residues: Antitoxin VapB4 (85 aa).

Belongs to the phD/YefM antitoxin family. As to quaternary structure, interacts with cognate toxin VapC4.

Functionally, antitoxin component of a type II toxin-antitoxin (TA) system. Antitoxin that counteracts the effect of the VapC4 toxin. The sequence is that of Antitoxin VapB4 (vapB4) from Mycobacterium tuberculosis (strain CDC 1551 / Oshkosh).